The sequence spans 598 residues: Phospholipase B-like protein G (598 aa).

A signal peptide spans 1–24 (MIKSYYLFFIILIFLIFINNFILC). N-linked (GlcNAc...) asparagine glycosylation is found at Asn50, Asn98, Asn173, Asn341, Asn368, Asn450, Asn480, Asn526, and Asn576.

It belongs to the phospholipase B-like family.

It localises to the secreted. Probable phospholipase. The protein is Phospholipase B-like protein G (plbG) of Dictyostelium discoideum (Social amoeba).